The following is a 63-amino-acid chain: Small ribosomal subunit protein bS21 (63 aa).

This sequence belongs to the bacterial ribosomal protein bS21 family.

In Bacteroides fragilis (strain ATCC 25285 / DSM 2151 / CCUG 4856 / JCM 11019 / LMG 10263 / NCTC 9343 / Onslow / VPI 2553 / EN-2), this protein is Small ribosomal subunit protein bS21.